The chain runs to 664 residues: Frizzled-3 (664 aa).

The N-terminal stretch at 1–16 (MAAYLISFIWVSVILA) is a signal peptide. Topologically, residues 17–204 (QKSMGHSLFA…REELSFARYF (188 aa)) are extracellular. The FZ domain occupies 22-135 (HSLFACEPIT…CSRFPDCDEP (114 aa)). Intrachain disulfides connect Cys27/Cys88, Cys35/Cys81, Cys72/Cys109, Cys98/Cys132, and Cys102/Cys126. Residue Asn41 is glycosylated (N-linked (GlcNAc...) asparagine). A helical transmembrane segment spans residues 205–225 (IGVISIVCLSATLFTFLTFLI). The Cytoplasmic portion of the chain corresponds to 226 to 236 (DVTRFRYPERP). The helical transmembrane segment at 237–257 (IIFYAVCYMMVSLIFFIGFLL) threads the bilayer. Residues 258-287 (EDKVACNGANPSQYKASTVTQGSHNKACTM) lie on the Extracellular side of the membrane. Residues 288–308 (LFMVLYFFTMAGSVWWVILTI) form a helical membrane-spanning segment. The Cytoplasmic segment spans residues 309-327 (TWFLAAVPKWGSEAIEKKA). The helical transmembrane segment at 328–348 (LLFHASAWGIPGTLTIILLAM) threads the bilayer. Topologically, residues 349 to 373 (NKIEGDNISGVCFVGLYDVHALRYF) are extracellular. N-linked (GlcNAc...) asparagine glycosylation is present at Asn355. The chain crosses the membrane as a helical span at residues 374-394 (VLAPLCLDVVVGVSLLLAGII). At 395 to 419 (SLNRVRIEIPLEKENQDKLVKFMIR) the chain is on the cytoplasmic side. The helical transmembrane segment at 420–440 (IGVFSILYLVPLLVVIGCYFY) threads the bilayer. Topologically, residues 441-476 (EQAYRGVWETTWVQERCREYHIPCPYKVTQTSRPDL) are extracellular. Residues 477–497 (ILFLMKYLMLLVVGIPSVFWV) traverse the membrane as a helical segment. At 498 to 664 (GSKKTCFEWA…RVIEADATSA (167 aa)) the chain is on the cytoplasmic side. Residues 501–506 (KTCFEW) carry the Lys-Thr-X-X-X-Trp motif, mediates interaction with the PDZ domain of Dvl family members motif. The segment at 537-664 (RDPNTPIVRK…RVIEADATSA (128 aa)) is disordered. Polar residues-rich tracts occupy residues 549-564 (GTST…STQL) and 573-585 (KAGS…SSYH).

It belongs to the G-protein coupled receptor Fz/Smo family. In terms of tissue distribution, expression restricted to the early nervous system.

The protein localises to the membrane. It localises to the cell membrane. It is found in the cell surface. The protein resides in the apical cell membrane. Receptor for Wnt proteins. Most of frizzled receptors are coupled to the beta-catenin canonical signaling pathway, which leads to the activation of disheveled proteins, inhibition of GSK-3 kinase, nuclear accumulation of beta-catenin and activation of Wnt target genes. A second signaling pathway involving PKC and calcium fluxes has been seen for some family members, but it is not yet clear if it represents a distinct pathway or if it can be integrated in the canonical pathway, as PKC seems to be required for Wnt-mediated inactivation of GSK-3 kinase. Both pathways seem to involve interactions with G-proteins. Activated by Wnt8. Involved in transduction and intercellular transmission of polarity information during tissue morphogenesis and/or in differentiated tissues. Plays a role in controlling early axon growth and guidance processes necessary for the formation of a subset of central and peripheral major fiber tracts. Involved in the migration of cranial neural crest cells. May also be implicated in the transmission of sensory information from the trunk and limbs to the brain. Controls commissural sensory axons guidance after midline crossing along the anterior-posterior axis in the developing spinal cord in a Wnt-dependent signaling pathway. Together with FZD6, is involved in the neural tube closure and plays a role in the regulation of the establishment of planar cell polarity (PCP). Promotes neurogenesis by maintaining sympathetic neuroblasts within the cell cycle in a beta-catenin-dependent manner. The protein is Frizzled-3 (fzd3) of Xenopus laevis (African clawed frog).